The primary structure comprises 101 residues: Small ribosomal subunit protein uS14m (101 aa).

The protein belongs to the universal ribosomal protein uS14 family. In terms of assembly, component of the mitochondrial ribosome small subunit (28S) which comprises a 12S rRNA and about 30 distinct proteins. Interacts with LIAT1.

It localises to the mitochondrion. The polypeptide is Small ribosomal subunit protein uS14m (mrps14) (Dictyostelium citrinum (Slime mold)).